The sequence spans 64 residues: MAKMAKTFVVTLKRSTIKCTQDQKDAVRVLGLKKIRQTVEVKDSAAARGNIMKVQHLIDVEVKG.

The protein belongs to the universal ribosomal protein uL30 family. In terms of assembly, part of the 50S ribosomal subunit.

The protein is Large ribosomal subunit protein uL30 of Bdellovibrio bacteriovorus (strain ATCC 15356 / DSM 50701 / NCIMB 9529 / HD100).